The sequence spans 1222 residues: Chitin synthase 4 (1222 aa).

Residues 1–108 (MSLPERPGGI…NRIDKDHPNY (108 aa)) are disordered. The segment covering 51–68 (LSANSFAETIPSPNNSFV) has biased composition (polar residues). Asparagine 64 is a glycosylation site (N-linked (GlcNAc...) asparagine). Basic and acidic residues predominate over residues 94–107 (IRPERNRIDKDHPN). The N-linked (GlcNAc...) asparagine glycan is linked to asparagine 116. The interval 136–199 (TTDVSGSRSQ…KSTKKRSTPQ (64 aa)) is disordered. Polar residues predominate over residues 137–154 (TDVSGSRSQTLDGVSDTS). A compositionally biased stretch (basic residues) spans 176-196 (SAKRVSRHKSGKITKSTKKRS). 2 helical membrane-spanning segments follow: residues 204–224 (PPSFWNVYCAIITFWCPDFML) and 242–262 (MGLISLILLIMGCVGFITFGF). 2 N-linked (GlcNAc...) asparagine glycosylation sites follow: asparagine 378 and asparagine 418. Residues 509–529 (YVFLALILSVVGSRFVLALIF) traverse the membrane as a helical segment. The segment at 595-662 (RFSTVYGPDR…PPSDGPGPAG (68 aa)) is disordered. Residues 608–643 (NKRVPTTMASSGGSGSQLLHPNSMYRQGNDSRSSFL) are compositionally biased toward polar residues. Asparagine 636 and asparagine 1031 each carry an N-linked (GlcNAc...) asparagine glycan. The next 3 membrane-spanning stretches (helical) occupy residues 1056–1076 (FIVFVELMGTLVLPAAIAFTF), 1090–1110 (VIPLILLALILGLPAVLIVIT), and 1116–1136 (YLVWMMIYLFSLPVWNFVLPV). The tract at residues 1201–1222 (GGGNSWSMPPGHQYHDDYYSDA) is disordered. A compositionally biased stretch (basic and acidic residues) spans 1213-1222 (QYHDDYYSDA).

It belongs to the chitin synthase family. Class IV subfamily.

Its subcellular location is the cell membrane. The catalysed reaction is [(1-&gt;4)-N-acetyl-beta-D-glucosaminyl](n) + UDP-N-acetyl-alpha-D-glucosamine = [(1-&gt;4)-N-acetyl-beta-D-glucosaminyl](n+1) + UDP + H(+). Functionally, polymerizes chitin, a structural polymer of the cell wall and septum, by transferring the sugar moiety of UDP-GlcNAc to the non-reducing end of the growing chitin polymer. Plays a role in cell wall integrity and is involved in tolerance to hyperosmotic conditions. Required to successfully penetrate the host plants and thus plays a key role in pathogenicity. The chain is Chitin synthase 4 from Verticillium dahliae (strain VdLs.17 / ATCC MYA-4575 / FGSC 10137) (Verticillium wilt).